Here is a 248-residue protein sequence, read N- to C-terminus: Ribosomal RNA small subunit methyltransferase J (248 aa).

Residues 97-98 (RD), 113-114 (ER), and aspartate 167 each bind S-adenosyl-L-methionine.

This sequence belongs to the methyltransferase superfamily. RsmJ family.

It is found in the cytoplasm. The enzyme catalyses guanosine(1516) in 16S rRNA + S-adenosyl-L-methionine = N(2)-methylguanosine(1516) in 16S rRNA + S-adenosyl-L-homocysteine + H(+). Functionally, specifically methylates the guanosine in position 1516 of 16S rRNA. This Aeromonas hydrophila subsp. hydrophila (strain ATCC 7966 / DSM 30187 / BCRC 13018 / CCUG 14551 / JCM 1027 / KCTC 2358 / NCIMB 9240 / NCTC 8049) protein is Ribosomal RNA small subunit methyltransferase J.